Consider the following 123-residue polypeptide: MAKSIRSKWKRKMRAEKRKKNAPKELARLKNVLAKGSEVLMDDVKEIATVVPSKKINEKTDMDVDAPEGDSSKMDMELKRNKKNLRDQHGQYPVWLNQRQQKKLKSQCGKKKGKSKQAKKLAW.

Positions 1–21 (MAKSIRSKWKRKMRAEKRKKN) are enriched in basic residues. Disordered regions lie at residues 1–23 (MAKSIRSKWKRKMRAEKRKKNAP) and 55–123 (KINE…KLAW). Basic and acidic residues predominate over residues 70–89 (DSSKMDMELKRNKKNLRDQH). Residues 100–123 (QQKKLKSQCGKKKGKSKQAKKLAW) are compositionally biased toward basic residues.

The protein belongs to the learning-associated protein family.

It is found in the nucleus. It localises to the nucleolus. The protein localises to the chromosome. Its function is as follows. Regulates dendritic and spine growth and synaptic transmission. This Xenopus tropicalis (Western clawed frog) protein is Protein LLP homolog (llph).